Consider the following 337-residue polypeptide: D-alanine--D-alanine ligase (337 aa).

The ATP-grasp domain maps to 124-330; it reads KMWFSALGIP…FTEYLSLVIN (207 aa). Residue 154-209 coordinates ATP; it reads ALANWGSIFIKAASQGSSVGCYKVDDSSKVAQVLKDAFGYAPYVVVEKTIKARELE. Residues Asp-284, Glu-297, and Asn-299 each contribute to the Mg(2+) site.

The protein belongs to the D-alanine--D-alanine ligase family. The cofactor is Mg(2+). Mn(2+) serves as cofactor.

The protein localises to the cytoplasm. The enzyme catalyses 2 D-alanine + ATP = D-alanyl-D-alanine + ADP + phosphate + H(+). The protein operates within cell wall biogenesis; peptidoglycan biosynthesis. Its function is as follows. Cell wall formation. This chain is D-alanine--D-alanine ligase, found in Shewanella sp. (strain W3-18-1).